A 318-amino-acid polypeptide reads, in one-letter code: Transaldolase (318 aa).

Residue Lys132 is the Schiff-base intermediate with substrate of the active site.

Belongs to the transaldolase family. Type 1 subfamily. As to quaternary structure, homodimer.

The protein resides in the cytoplasm. It catalyses the reaction D-sedoheptulose 7-phosphate + D-glyceraldehyde 3-phosphate = D-erythrose 4-phosphate + beta-D-fructose 6-phosphate. Its pathway is carbohydrate degradation; pentose phosphate pathway; D-glyceraldehyde 3-phosphate and beta-D-fructose 6-phosphate from D-ribose 5-phosphate and D-xylulose 5-phosphate (non-oxidative stage): step 2/3. Its function is as follows. Transaldolase is important for the balance of metabolites in the pentose-phosphate pathway. This chain is Transaldolase, found in Hamiltonella defensa subsp. Acyrthosiphon pisum (strain 5AT).